The sequence spans 356 residues: UDP-N-acetylglucosamine--N-acetylmuramyl-(pentapeptide) pyrophosphoryl-undecaprenol N-acetylglucosamine transferase (356 aa).

Residues 14 to 16 (TGG), Asn-126, Arg-162, Ser-190, Ile-244, and Gln-289 contribute to the UDP-N-acetyl-alpha-D-glucosamine site.

This sequence belongs to the glycosyltransferase 28 family. MurG subfamily.

The protein resides in the cell inner membrane. The catalysed reaction is di-trans,octa-cis-undecaprenyl diphospho-N-acetyl-alpha-D-muramoyl-L-alanyl-D-glutamyl-meso-2,6-diaminopimeloyl-D-alanyl-D-alanine + UDP-N-acetyl-alpha-D-glucosamine = di-trans,octa-cis-undecaprenyl diphospho-[N-acetyl-alpha-D-glucosaminyl-(1-&gt;4)]-N-acetyl-alpha-D-muramoyl-L-alanyl-D-glutamyl-meso-2,6-diaminopimeloyl-D-alanyl-D-alanine + UDP + H(+). It participates in cell wall biogenesis; peptidoglycan biosynthesis. In terms of biological role, cell wall formation. Catalyzes the transfer of a GlcNAc subunit on undecaprenyl-pyrophosphoryl-MurNAc-pentapeptide (lipid intermediate I) to form undecaprenyl-pyrophosphoryl-MurNAc-(pentapeptide)GlcNAc (lipid intermediate II). The protein is UDP-N-acetylglucosamine--N-acetylmuramyl-(pentapeptide) pyrophosphoryl-undecaprenol N-acetylglucosamine transferase of Cupriavidus pinatubonensis (strain JMP 134 / LMG 1197) (Cupriavidus necator (strain JMP 134)).